A 194-amino-acid polypeptide reads, in one-letter code: Calcium channel flower (194 aa).

Transmembrane regions (helical) follow at residues 34–54 (LLGIVAAFFAILFGLWNVFSI), 59–79 (VSCLVAGIIQMVAGFVVMLLE), and 107–127 (GLYIAMAIPPIILCFGLASLF).

The protein belongs to the calcium channel flower family. In terms of assembly, homomultimer. Associates with the dally/ magu complex.

The protein localises to the cell membrane. It is found in the cytoplasmic vesicle. Its subcellular location is the secretory vesicle. It localises to the synaptic vesicle membrane. The protein resides in the presynaptic cell membrane. The protein localises to the endosome. Its activity is regulated as follows. Channel activity is inhibited by La(3+), which reduces Ca(2+) influx and thus inhibits it's function in promoting activity-dependent bulk endocytosis (ADBE) in response to high stimuli. In terms of biological role, transmembrane protein which mediates synaptic endocytosis, fitness-based cell culling, neuronal culling, morphogen gradient scaling, and calcium transport. Regulates synaptic endocytosis and hence couples exo- with endocytosis. Controls two major modes of synaptic vesicle (SV) endocytosis in the synaptic boutons of neuromuscular junctions (NMJs); Ca(2+) channel-independent Clathrin-mediated endocytosis (CME) in response to mild stimulation, and Ca(2+) channel-dependent activity-dependent bulk endocytosis (ADBE) in response to strong stimulation. Functions in ADBE and subsequent SV reformation from bulk endosomes by initiating Ca(2+) channel-dependent phosphatidylinositol 4,5-bisphosphate (PtdIns(4,5)P2) compartmentalization in synaptic boutons. There it acts at the periactive zone to provide the low Ca(2+) levels required to initiate Calcineurin activation and upregulate PtdIns(4,5)P2. Conversely PtdIns(4,5)P2 enhances fwe Ca(2+) channel-activity, establishing a positive feedback loop that induces PtdIns(4,5)P2 microdomain at the periactive zone. These microdomains trigger bulk membrane invagination (i.e. ADBE) by triggering actin polymerization while also promoting localization of fwe to bulk endosomes, thereby removing the ADBE trigger to reduce endocytosis and prevent excess membrane uptake. PtdIns(4,5)P2 then promotes SV reformation from the bulk endosomes, to coordinate ADBE and subsequent SV reformation. Different combinations of the flower isoforms at the cell membrane are also required for the identification and elimination of suboptimal or supernumerary cells during development, regeneration, and adulthood. Required for the recognition and elimination of unfit cells in the developing wing during cell competition. In the developing pupal retina, mediates the elimination of unwanted postmitotic neurons, including supernumerary photoreceptor neurons that form at the periphery of the retina and are contained within incomplete ommatidia units. Also required for efficient elimination and replacement of old neurons by newly generated neurons during regeneration in the adult brain following mechanical injury. Downstream of the flower fitness fingerprints, cells identified as unwanted or unfit are eliminated via apoptosis through the expression of ahuizotl (azot). However, the cells marked for elimination by the flower isoforms only undergo apoptosis if additional thresholds are met; (1) their neighboring fit/healthy cells express different levels of the fwe isoforms, and (2) the levels of the protective signal SPARC expressed by the loser or unwanted cells are unable to inhibit caspase activation. These additional thresholds for flower-mediated apoptosis, allows useful cells to recover from transient and limited stress before they are unnecessarily eliminated. Functions with dally and magu in a mechanism of scaling, which utilises apoptosis to ensure that the dpp morphogen gradient, which mediates organ growth, remains proportional to the size of the growing wing. In this mechanism, fwe represses dally- and Magu-dependent activity in expanding the gradient, and dally/Magu inhibits fwe-dependent apoptosis to keep cell death rate low. When the levels of these different proteins are optimally regulated the gradient correctly scales with organ growth but when this fails, fwe-mediated apoptosis is activated to trim the developing tissue to match the correct size of the gradient. The sequence is that of Calcium channel flower from Drosophila erecta (Fruit fly).